The chain runs to 1072 residues: Carbamoyl phosphate synthase large chain (1072 aa).

The segment at 1–401 is carboxyphosphate synthetic domain; the sequence is MPKRLDINTI…SLLKAVRSLE (401 aa). ATP-binding residues include R129, R169, G175, G176, K208, I210, E215, G241, V242, H243, Q284, and E298. In terms of domain architecture, ATP-grasp 1 spans 133 to 327; it reads RTLMQDLNEP…IAKLAAKIAV (195 aa). 3 residues coordinate Mg(2+): Q284, E298, and N300. Residues Q284, E298, and N300 each coordinate Mn(2+). The interval 402–546 is oligomerization domain; it reads LGIYHLELDH…YSTYADENES (145 aa). Residues 547 to 929 form a carbamoyl phosphate synthetic domain region; it reads IVTDRKSVVV…ALYKGLVASG (383 aa). The ATP-grasp 2 domain maps to 671–861; sequence EAALTKLGIP…MANVATKVIL (191 aa). Residues R707, R746, E752, G777, V778, H779, S780, Q820, and E832 each coordinate ATP. Q820, E832, and N834 together coordinate Mg(2+). Mn(2+) is bound by residues Q820, E832, and N834. An MGS-like domain is found at 930 to 1072; that stretch reads INIPTHGSVI…QTKRHEVVHA (143 aa). Positions 930-1072 are allosteric domain; the sequence is INIPTHGSVI…QTKRHEVVHA (143 aa).

Belongs to the CarB family. As to quaternary structure, composed of two chains; the small (or glutamine) chain promotes the hydrolysis of glutamine to ammonia, which is used by the large (or ammonia) chain to synthesize carbamoyl phosphate. Tetramer of heterodimers (alpha,beta)4. Mg(2+) serves as cofactor. It depends on Mn(2+) as a cofactor.

It carries out the reaction hydrogencarbonate + L-glutamine + 2 ATP + H2O = carbamoyl phosphate + L-glutamate + 2 ADP + phosphate + 2 H(+). The enzyme catalyses hydrogencarbonate + NH4(+) + 2 ATP = carbamoyl phosphate + 2 ADP + phosphate + 2 H(+). Its pathway is amino-acid biosynthesis; L-arginine biosynthesis; carbamoyl phosphate from bicarbonate: step 1/1. The protein operates within pyrimidine metabolism; UMP biosynthesis via de novo pathway; (S)-dihydroorotate from bicarbonate: step 1/3. Large subunit of the glutamine-dependent carbamoyl phosphate synthetase (CPSase). CPSase catalyzes the formation of carbamoyl phosphate from the ammonia moiety of glutamine, carbonate, and phosphate donated by ATP, constituting the first step of 2 biosynthetic pathways, one leading to arginine and/or urea and the other to pyrimidine nucleotides. The large subunit (synthetase) binds the substrates ammonia (free or transferred from glutamine from the small subunit), hydrogencarbonate and ATP and carries out an ATP-coupled ligase reaction, activating hydrogencarbonate by forming carboxy phosphate which reacts with ammonia to form carbamoyl phosphate. This Bacillus cereus (strain AH187) protein is Carbamoyl phosphate synthase large chain.